Reading from the N-terminus, the 358-residue chain is Mannonate dehydratase (358 aa).

It belongs to the mannonate dehydratase family. Requires Fe(2+) as cofactor. Mn(2+) is required as a cofactor.

The enzyme catalyses D-mannonate = 2-dehydro-3-deoxy-D-gluconate + H2O. The protein operates within carbohydrate metabolism; pentose and glucuronate interconversion. In terms of biological role, catalyzes the dehydration of D-mannonate. In Lactococcus lactis subsp. cremoris (strain MG1363), this protein is Mannonate dehydratase.